Here is a 454-residue protein sequence, read N- to C-terminus: Venom prothrombin activator porpharin-D (454 aa).

The N-terminal stretch at 1-20 (MAPQLLLCLILTFLWSLPEA) is a signal peptide. The propeptide occupies 21–40 (ESNVFLKSKEANRFLQRTKR). The Gla domain occupies 41 to 86 (SNSLFEEFRPGNIERECIEEKCSKEEAREIFKDNEKTEAFWNVYVD). Residues E46, E47, E54, E56, E59, E60, E65, E66, E69, and E75 each carry the 4-carboxyglutamate modification. C57 and C62 are oxidised to a cystine. The 37-residue stretch at 86-122 (DGDQCSSNPCHYGGTCKDGIGSYTCTCLPNYEGKNCE) folds into the EGF-like 1; calcium-binding domain. 11 cysteine pairs are disulfide-bonded: C90–C101, C95–C110, C112–C121, C129–C140, C136–C149, C151–C164, C172–C316, C216–C221, C236–C252, C364–C378, and C389–C417. O-linked (Hex...) serine glycosylation occurs at S92. Positions 129–164 (CRFFNGNCWHFCKPVQNDTQCSCAESYRLGDDGHSC) constitute an EGF-like 2 domain. Residues 182–209 (REASLPDFVQSQNATLLKKSDNPSPDIR) constitute a propeptide, activation peptide. The region spanning 210–441 (IINGMDCKLG…FIPWIKAVMR (232 aa)) is the Peptidase S1 domain. Active-site charge relay system residues include H251 and D296. S393 serves as the catalytic Charge relay system.

It belongs to the peptidase S1 family. Snake venom subfamily. Heterodimer of a light chain and a heavy chain; disulfide-linked. The vitamin K-dependent, enzymatic carboxylation of some glutamate residues allows the modified protein to bind calcium. Expressed by the venom gland.

The protein localises to the secreted. It carries out the reaction Selective cleavage of Arg-|-Thr and then Arg-|-Ile bonds in prothrombin to form thrombin.. Functionally, snake prothrombin activator that attacks the hemostatic system of prey. This protein is functionally similar to blood coagulation factor Xa. In Pseudechis porphyriacus (Red-bellied black snake), this protein is Venom prothrombin activator porpharin-D.